The following is a 136-amino-acid chain: Nucleoside diphosphate kinase (136 aa).

ATP-binding residues include K10, F58, R86, T92, R104, and N114. H117 serves as the catalytic Pros-phosphohistidine intermediate.

This sequence belongs to the NDK family. In terms of assembly, homohexamer. Requires Mg(2+) as cofactor.

The protein localises to the cytoplasm. The enzyme catalyses a 2'-deoxyribonucleoside 5'-diphosphate + ATP = a 2'-deoxyribonucleoside 5'-triphosphate + ADP. The catalysed reaction is a ribonucleoside 5'-diphosphate + ATP = a ribonucleoside 5'-triphosphate + ADP. Its function is as follows. Major role in the synthesis of nucleoside triphosphates other than ATP. The ATP gamma phosphate is transferred to the NDP beta phosphate via a ping-pong mechanism, using a phosphorylated active-site intermediate. This chain is Nucleoside diphosphate kinase, found in Mycobacterium bovis (strain ATCC BAA-935 / AF2122/97).